A 528-amino-acid polypeptide reads, in one-letter code: Ankyrin repeat and death domain-containing protein 1B (528 aa).

ANK repeat units follow at residues 67 to 96, 100 to 129, 133 to 162, 166 to 197, 201 to 230, 234 to 263, 267 to 296, 300 to 329, 333 to 362, and 366 to 395; these read PNERSFQNAAKSNNLDLMEKLFEKKVNINV, MNRTALHFAVGRNHLSAVDFLLKHKARVDV, HGLTVIHLAAWSGSLEVMLMLVKAGADQRA, DGMSALHFATQSNHVRIVEYLIQDLHLKDLNQ, KGRKPFLLAAERGHVEMIEKLTFLNLHTSE, GGNTALHLAAKHGHSPAVQVLLAQWQDINE, LNISSLQIATRNGHASLVNFLLSENVDLHQ, PKESPLHLVVINNHITVVNSLLSAQHDIDI, KQQTPLHVAADRGNVELVETLLKAGCDLKA, and QGKTALAVASRSNHSLVVGMLIKAERYYAW. Positions 427–515 constitute a Death domain; the sequence is TLLWDLAYHQ…KLAEKTRHFK (89 aa).

The chain is Ankyrin repeat and death domain-containing protein 1B (ANKDD1B) from Homo sapiens (Human).